The chain runs to 258 residues: Zinc import ATP-binding protein ZnuC (258 aa).

Positions 7–233 (ITAKNINHAY…PAFQELFGQG (227 aa)) constitute an ABC transporter domain. 39 to 46 (GPNGAGKS) is a binding site for ATP.

Belongs to the ABC transporter superfamily. Zinc importer (TC 3.A.1.15.5) family. The complex is composed of two ATP-binding proteins (ZnuC), two transmembrane proteins (ZnuB) and a solute-binding protein (ZnuA).

Its subcellular location is the cell inner membrane. The catalysed reaction is Zn(2+)(out) + ATP(in) + H2O(in) = Zn(2+)(in) + ADP(in) + phosphate(in) + H(+)(in). Functionally, part of the ABC transporter complex ZnuABC involved in zinc import. Responsible for energy coupling to the transport system. This chain is Zinc import ATP-binding protein ZnuC, found in Hydrogenovibrio crunogenus (strain DSM 25203 / XCL-2) (Thiomicrospira crunogena).